Reading from the N-terminus, the 102-residue chain is Guanyl-specific ribonuclease Pc (102 aa).

Disulfide bonds link cysteine 2-cysteine 10 and cysteine 6-cysteine 101. Residue histidine 38 is part of the active site. Glutamate 56 serves as the catalytic Proton acceptor. Catalysis depends on histidine 90, which acts as the Proton donor.

The protein belongs to the ribonuclease N1/T1 family.

It carries out the reaction [RNA] containing guanosine + H2O = an [RNA fragment]-3'-guanosine-3'-phosphate + a 5'-hydroxy-ribonucleotide-3'-[RNA fragment].. This chain is Guanyl-specific ribonuclease Pc, found in Penicillium chrysogenum (Penicillium notatum).